The chain runs to 232 residues: Protein FAM246A (232 aa).

Disordered stretches follow at residues 1 to 47 (MATP…RAPG), 153 to 178 (LPPP…RGPT), and 191 to 232 (AASR…GGGD). A compositionally biased stretch (basic and acidic residues) spans 19 to 31 (EVLRRVTGRRRDP). Residues 211-220 (APVRKNHKKM) are compositionally biased toward basic residues.

Belongs to the FAM246 family.

This is Protein FAM246A from Homo sapiens (Human).